Here is a 230-residue protein sequence, read N- to C-terminus: 5'-methylthioadenosine/S-adenosylhomocysteine nucleosidase (230 aa).

The active-site Proton acceptor is the Glu12. Substrate-binding positions include Gly78, Ile152, and Met173 to Glu174. Catalysis depends on Asp197, which acts as the Proton donor.

The protein belongs to the PNP/UDP phosphorylase family. MtnN subfamily.

The enzyme catalyses S-adenosyl-L-homocysteine + H2O = S-(5-deoxy-D-ribos-5-yl)-L-homocysteine + adenine. The catalysed reaction is S-methyl-5'-thioadenosine + H2O = 5-(methylsulfanyl)-D-ribose + adenine. It carries out the reaction 5'-deoxyadenosine + H2O = 5-deoxy-D-ribose + adenine. It functions in the pathway amino-acid biosynthesis; L-methionine biosynthesis via salvage pathway; S-methyl-5-thio-alpha-D-ribose 1-phosphate from S-methyl-5'-thioadenosine (hydrolase route): step 1/2. Functionally, catalyzes the irreversible cleavage of the glycosidic bond in both 5'-methylthioadenosine (MTA) and S-adenosylhomocysteine (SAH/AdoHcy) to adenine and the corresponding thioribose, 5'-methylthioribose and S-ribosylhomocysteine, respectively. Also cleaves 5'-deoxyadenosine, a toxic by-product of radical S-adenosylmethionine (SAM) enzymes, into 5-deoxyribose and adenine. This Haemophilus influenzae (strain 86-028NP) protein is 5'-methylthioadenosine/S-adenosylhomocysteine nucleosidase.